Reading from the N-terminus, the 194-residue chain is Fe/S biogenesis protein NfuA (194 aa).

The [4Fe-4S] cluster site is built by C152 and C155.

Belongs to the NfuA family. As to quaternary structure, homodimer. Requires [4Fe-4S] cluster as cofactor.

Involved in iron-sulfur cluster biogenesis. Binds a 4Fe-4S cluster, can transfer this cluster to apoproteins, and thereby intervenes in the maturation of Fe/S proteins. Could also act as a scaffold/chaperone for damaged Fe/S proteins. The sequence is that of Fe/S biogenesis protein NfuA from Pseudomonas fluorescens (strain Pf0-1).